The following is a 329-amino-acid chain: Pantothenate kinase (329 aa).

The disordered stretch occupies residues 1 to 22; that stretch reads MPAQGPSHGELPPADAGRESSP. 107 to 114 is a binding site for ATP; it reads GSVAVGKS.

Belongs to the prokaryotic pantothenate kinase family.

The protein resides in the cytoplasm. It catalyses the reaction (R)-pantothenate + ATP = (R)-4'-phosphopantothenate + ADP + H(+). It participates in cofactor biosynthesis; coenzyme A biosynthesis; CoA from (R)-pantothenate: step 1/5. The sequence is that of Pantothenate kinase from Nocardioides sp. (strain ATCC BAA-499 / JS614).